Consider the following 89-residue polypeptide: Large ribosomal subunit protein uL29 (89 aa).

Belongs to the universal ribosomal protein uL29 family.

The sequence is that of Large ribosomal subunit protein uL29 from Frankia alni (strain DSM 45986 / CECT 9034 / ACN14a).